We begin with the raw amino-acid sequence, 533 residues long: Ribonuclease Y (533 aa).

The disordered stretch occupies residues 16 to 41 (VERIRRRAEQDAAEQTERVRREAEQI). Residues 22 to 41 (RAEQDAAEQTERVRREAEQI) show a composition bias toward basic and acidic residues. The region spanning 223 to 289 (VVSVLHLPSD…RITLTALVSD (67 aa)) is the KH domain. An HD domain is found at 349–442 (VLAHLVESAH…TQAADQISGG (94 aa)).

The protein belongs to the RNase Y family.

Endoribonuclease that initiates mRNA decay. This chain is Ribonuclease Y, found in Parafrankia sp. (strain EAN1pec).